Here is a 6548-residue protein sequence, read N- to C-terminus: Epiplakin (6548 aa).

At threonine 33 the chain carries Phosphothreonine. Plectin repeat units lie at residues 41–78, 79–116, 117–154, 155–192, 285–322, 323–360, 362–398, 399–436, and 437–470; these read AALP…TGLG, LTLL…LELK, EKLL…RTLG, WRLL…KETW, RRYL…KGIA, LQLL…PELH, QLLV…QPLA, LRLL…EETR, and QRLS…PETG. Positions 49–1123 are interaction with KRT5; sequence SIAGVYVEAS…KASGLHLLPL (1075 aa). Positions 545–565 form a coiled coil; the sequence is SVEELAAELKNIVEQAAATAK. Plectin repeat units follow at residues 611 to 648, 649 to 686, 687 to 724, 725 to 762, and 766 to 800; these read QRYL…PGTA, LILL…PDVY, AKLL…RDHG, IRLL…QILN, and LDPS…SETG. The stretch at 851–886 forms a coiled coil; the sequence is TEDRRRQLLQRYRQRKITLEQVTQLLEKEMRRWTDI. 8 Plectin repeats span residues 931 to 968, 969 to 1006, 1007 to 1044, 1224 to 1284, 1285 to 1322, 1323 to 1360, 1361 to 1398, and 1402 to 1436; these read HRYL…PSTA, LALL…AEVY, GKLK…VEQA, QETL…TGLG, QQLL…MEQS, EHLR…QSEA, FPLL…EQTS, and TATG…ADTG. Residue threonine 1551 is modified to Phosphothreonine. Plectin repeat units follow at residues 1572–1609, 1610–1647, 1648–1685, 1686–1723, and 1727–1761; these read RRSL…PGTA, LVLL…KETY, MKLL…RDHG, IRLL…EEMN, and SDPS…PETG. Residues 1580 to 6545 form an interaction with KRT5 region; the sequence is FIAGVLIQDT…PETGLLFLSL (4966 aa). Residues 1819–1851 are a coiled coil; the sequence is RKLLREYRAQNIGLENLLEVITSTVEETEKQSQ. 9 Plectin repeats span residues 1898 to 1935, 1936 to 1973, 1974 to 2011, 2012 to 2049, 2225 to 2267, 2268 to 2305, 2306 to 2343, 2344 to 2381, and 2385 to 2419; these read RVYL…AGFA, AQML…EDLR, ERLV…REEA, LRLL…DDSL, KRYL…PGTA, LVLL…GEIQ, EKLL…RDHG, IRLL…EDMN, and ADPG…PETG. A phosphoserine mark is found at serine 2430 and serine 2508. Positions 2578-2626 are disordered; that stretch reads AEETQESKPKPRDASLKQQDTGARGSGTSPDEGDAQDSSESARQQQEQT. Basic and acidic residues predominate over residues 2582–2592; that stretch reads QESKPKPRDAS. 2 stretches are compositionally biased toward polar residues: residues 2593-2606 and 2615-2626; these read LKQQ…SGTS and SSESARQQQEQT. Plectin repeat units follow at residues 2740–2782, 2783–2820, 2821–2858, 2859–2896, and 2900–2934; these read KRYL…PGTA, LVLL…GEIQ, EKLL…RDHG, IRLL…EDMN, and ADPG…PETG. Positions 2748-2940 are interaction with KRT14; sequence CIAGVLVPVQ…PETGFYMLQL (193 aa). The tract at residues 3093-3144 is disordered; it reads AEETQESKPKPRDASLKQQDTGARGSGTSPDEGDAQDSSESARQQQEQTLRA. Over residues 3097-3107 the composition is skewed to basic and acidic residues; that stretch reads QESKPKPRDAS. 2 stretches are compositionally biased toward polar residues: residues 3108–3121 and 3130–3144; these read LKQQ…SGTS and SSES…TLRA. A Phosphoserine modification is found at serine 3220. 5 Plectin repeats span residues 3255 to 3297, 3298 to 3335, 3336 to 3373, 3374 to 3411, and 3415 to 3449; these read KRYL…PGTA, LVLL…GEIQ, EKLL…RDHG, IRLL…EDMN, and ADPG…PETG. Serine 3460 and serine 3538 each carry phosphoserine. The interval 3608-3659 is disordered; the sequence is AEETQESKPKPRDASLKQQDTGARGSGTSPDEGDAQDSSESARQQQEQTLRA. Basic and acidic residues predominate over residues 3612 to 3622; that stretch reads QESKPKPRDAS. 2 stretches are compositionally biased toward polar residues: residues 3623–3636 and 3645–3659; these read LKQQ…SGTS and SSES…TLRA. A Phosphoserine modification is found at serine 3735. 5 Plectin repeats span residues 3770–3812, 3813–3850, 3851–3888, 3889–3926, and 3930–3964; these read KRYL…PGTA, LVLL…GEIQ, EKLL…RDHG, IRLL…EDMN, and ADPG…PETG. Phosphoserine is present on residues serine 3975 and serine 4053. A disordered region spans residues 4123-4174; sequence AEETQESKPKPRDASLKQQDTGARGSGTSPDEGDAQDSSESARQQQEQTLRA. Basic and acidic residues predominate over residues 4127-4137; sequence QESKPKPRDAS. 2 stretches are compositionally biased toward polar residues: residues 4138–4151 and 4160–4174; these read LKQQ…SGTS and SSES…TLRA. Plectin repeat units follow at residues 4285–4327, 4328–4365, 4366–4403, 4404–4441, and 4445–4479; these read KRYL…PGTA, LVLL…GEIQ, EKLL…RDHG, IRLL…EDMN, and ADPG…PETG. The tract at residues 4638–4689 is disordered; the sequence is AEETQESKPKPRDASLKQQDTGARGSGTSPDEGDAQDSSESARQQQEQTLRA. Residues 4642-4652 are compositionally biased toward basic and acidic residues; sequence QESKPKPRDAS. Composition is skewed to polar residues over residues 4653–4666 and 4675–4689; these read LKQQ…SGTS and SSES…TLRA. Serine 4765 is subject to Phosphoserine. 5 Plectin repeats span residues 4800–4842, 4843–4880, 4881–4918, 4919–4956, and 4960–4994; these read KRYL…PGTA, LVLL…GEIQ, EKLL…RDHG, IRLL…EDMN, and ADPG…PETG. Serine 5005 and serine 5083 each carry phosphoserine. Residues 5153–5204 form a disordered region; that stretch reads AEETQESKPKPRDASLKQQDTGARGSGTSPDEGDAQDSSESARQQQEQTLRA. A compositionally biased stretch (basic and acidic residues) spans 5157-5167; sequence QESKPKPRDAS. Composition is skewed to polar residues over residues 5168–5181 and 5190–5204; these read LKQQ…SGTS and SSES…TLRA. 5 Plectin repeats span residues 5315 to 5357, 5358 to 5395, 5396 to 5433, 5434 to 5471, and 5475 to 5509; these read KRYL…PGTA, LVLL…GEIQ, EKLL…RDHG, IRLL…EDMN, and ADPG…PETG. A disordered region spans residues 5668–5719; the sequence is AEETQESKPKPRDASLKQQDTGARGSGTSPDEGDAQDSSESARQQQEQTLRA. The segment covering 5672 to 5682 has biased composition (basic and acidic residues); sequence QESKPKPRDAS. 2 stretches are compositionally biased toward polar residues: residues 5683–5696 and 5705–5719; these read LKQQ…SGTS and SSES…TLRA. Serine 5795 carries the phosphoserine modification. 5 Plectin repeats span residues 5830–5872, 5873–5910, 5911–5948, 5949–5986, and 5990–6024; these read KRYL…PGTA, LVLL…GEIQ, EKLL…RDHG, IRLL…EDMN, and ADPG…PETG. Phosphoserine is present on residues serine 6035 and serine 6113. The segment at 6183–6234 is disordered; the sequence is AEETQESKPKPRDASLKQQDTGARGSGTSPDEGDAQDSSESARQQQEQTLRA. Basic and acidic residues predominate over residues 6187-6197; sequence QESKPKPRDAS. Polar residues-rich tracts occupy residues 6198-6211 and 6220-6234; these read LKQQ…SGTS and SSES…TLRA. Residue serine 6310 is modified to Phosphoserine. 5 Plectin repeats span residues 6345-6387, 6388-6425, 6426-6463, 6464-6501, and 6505-6539; these read KRYL…PGTA, LVLL…GEIQ, EKLL…KNHG, IRLL…QEMN, and ADPG…PETG.

The protein belongs to the plakin or cytolinker family. Interacts with KRT5, KRT14 and KRT5/KRT14 heterotetramer; interacts preferentially with assembled filaments rather than keratin monomers. Interacts with KRT8 and KRT18 and KRT8/KRT18 heterotetramer; interacts preferentially with assembled filaments rather than keratin monomers. Interacts with KRT1, VIM and DES; interaction is stronger with KRT1 than with VIM or DES; interaction is dependent of higher-order structure of intermediate filament. As to expression, high levels in skin, small intestine and salivary gland. Lower levels in lung, uterus and liver. Not detected in brain, kidney, muscle, heart or spleen. In skin, expressed in all epidermal layers but not in the dermis. In intestine, expressed exclusively in the epithelial cell layer of the villi. In liver, expressed at hepatocyte margins. Around the region of the wound, expressed in the upper half of the epidermis. Weakly expressed on the basilar side of the suprabasal layer of the epidermis at the wound's edge. Expressed strongly in the upper layer of the epidermis, especially in larger keratinocytes. Expressed in undifferentiated primary keratinocytes. Strongly expressed in ductal cells, and also expressed in acinar cells. Expressed in hepatocytes and cholangiocytes.

Its subcellular location is the cytoplasm. It localises to the cytoskeleton. It is found in the apicolateral cell membrane. The protein localises to the basolateral cell membrane. The protein resides in the cell junction. Its subcellular location is the hemidesmosome. It localises to the tight junction. It is found in the cell projection. Functionally, cytoskeletal linker protein that connects to intermediate filaments and controls their reorganization in response to stress. In response to mechanical stress like wound healing, is associated with the machinery for cellular motility by slowing down keratinocyte migration and proliferation and accelerating keratin bundling in proliferating keratinocytes thus contributing to tissue architecture. However in wound healing in corneal epithelium also positively regulates cell differentiation and proliferation and negatively regulates migration thereby controlling corneal epithelium morphogenesis and integrity. In response to cellular stress, plays a role in keratin filament reorganization, probably by protecting keratin filaments against disruption. During liver and pancreas injuries, plays a protective role by chaperoning disease-induced intermediate filament reorganization. This chain is Epiplakin, found in Mus musculus (Mouse).